Here is a 121-residue protein sequence, read N- to C-terminus: Small ribosomal subunit protein uS13 (121 aa).

The interval 91–121 (HKRGLPVRGQRTRTNARTRKGPRRAAASLKK) is disordered.

This sequence belongs to the universal ribosomal protein uS13 family. In terms of assembly, part of the 30S ribosomal subunit. Forms a loose heterodimer with protein S19. Forms two bridges to the 50S subunit in the 70S ribosome.

Its function is as follows. Located at the top of the head of the 30S subunit, it contacts several helices of the 16S rRNA. In the 70S ribosome it contacts the 23S rRNA (bridge B1a) and protein L5 of the 50S subunit (bridge B1b), connecting the 2 subunits; these bridges are implicated in subunit movement. Contacts the tRNAs in the A and P-sites. This Bordetella petrii (strain ATCC BAA-461 / DSM 12804 / CCUG 43448) protein is Small ribosomal subunit protein uS13.